Here is a 294-residue protein sequence, read N- to C-terminus: Protoheme IX farnesyltransferase 1 (294 aa).

9 consecutive transmembrane segments (helical) span residues 8 to 28, 35 to 55, 82 to 102, 107 to 127, 132 to 152, 162 to 182, 208 to 228, 229 to 249, and 263 to 283; these read VTKPGIIMGNLISVAGGFLLA, PWLMVATLIGLSLVVASGCAI, AMAALCHGVVLGIIGFGLLIA, AAVFFAAFGYFIYVGVYSLYM, VYGTFIGSLSGAVPPVVGYCA, LILLVMFSLWQMPHSYAIAIF, IVLYIAIYALVVMLLPISGYT, GAAFMAVACITSFWWLLMALR, and QVFAFSIINITALSIAMAVDY.

This sequence belongs to the UbiA prenyltransferase family. Protoheme IX farnesyltransferase subfamily.

The protein localises to the cell inner membrane. It catalyses the reaction heme b + (2E,6E)-farnesyl diphosphate + H2O = Fe(II)-heme o + diphosphate. It participates in porphyrin-containing compound metabolism; heme O biosynthesis; heme O from protoheme: step 1/1. Functionally, converts heme B (protoheme IX) to heme O by substitution of the vinyl group on carbon 2 of heme B porphyrin ring with a hydroxyethyl farnesyl side group. The sequence is that of Protoheme IX farnesyltransferase 1 from Pseudoalteromonas translucida (strain TAC 125).